A 106-amino-acid polypeptide reads, in one-letter code: Large ribosomal subunit protein bL21 (106 aa).

Belongs to the bacterial ribosomal protein bL21 family. As to quaternary structure, part of the 50S ribosomal subunit. Contacts protein L20.

In terms of biological role, this protein binds to 23S rRNA in the presence of protein L20. This Coprothermobacter proteolyticus (strain ATCC 35245 / DSM 5265 / OCM 4 / BT) protein is Large ribosomal subunit protein bL21.